The primary structure comprises 88 residues: MKTQQFTVIDPLGIHARPASQLVAKATPFASAIEVRTEEKAANLKSILGVMGLALKQGSQFTLYVEGEDEDQAFEALATLLTEMGLAQ.

In terms of domain architecture, HPr spans 1–88; that stretch reads MKTQQFTVID…TLLTEMGLAQ (88 aa). H15 acts as the Pros-phosphohistidine intermediate in catalysis. S46 carries the phosphoserine; by HPrK/P modification.

This sequence belongs to the HPr family.

The protein localises to the cytoplasm. Its activity is regulated as follows. Phosphorylation on Ser-46 inhibits the phosphoryl transfer from enzyme I to HPr. In terms of biological role, general (non sugar-specific) component of the phosphoenolpyruvate-dependent sugar phosphotransferase system (sugar PTS). This major carbohydrate active-transport system catalyzes the phosphorylation of incoming sugar substrates concomitantly with their translocation across the cell membrane. The phosphoryl group from phosphoenolpyruvate (PEP) is transferred to the phosphoryl carrier protein HPr by enzyme I. Phospho-HPr then transfers it to the PTS EIIA domain. Its function is as follows. P-Ser-HPr interacts with the catabolite control protein A (CcpA), forming a complex that binds to DNA at the catabolite response elements cre, operator sites preceding a large number of catabolite-regulated genes. Thus, P-Ser-HPr is a corepressor in carbon catabolite repression (CCR), a mechanism that allows bacteria to coordinate and optimize the utilization of available carbon sources. P-Ser-HPr also plays a role in inducer exclusion, in which it probably interacts with several non-PTS permeases and inhibits their transport activity. The sequence is that of Phosphocarrier protein HPr (ptsH) from Lysinibacillus sphaericus (Bacillus sphaericus).